The following is a 251-amino-acid chain: Cell division protein ZapD (251 aa).

The protein belongs to the ZapD family. Interacts with FtsZ.

Its subcellular location is the cytoplasm. Cell division factor that enhances FtsZ-ring assembly. Directly interacts with FtsZ and promotes bundling of FtsZ protofilaments, with a reduction in FtsZ GTPase activity. The sequence is that of Cell division protein ZapD from Janthinobacterium sp. (strain Marseille) (Minibacterium massiliensis).